Here is a 396-residue protein sequence, read N- to C-terminus: Phosphoglycerate kinase (396 aa).

Substrate is bound by residues 24 to 26 (DFN), Arg39, 62 to 65 (HLGR), Arg120, and Arg153. ATP contacts are provided by residues Lys203, Gly294, Glu325, and 352 to 355 (GGDS).

The protein belongs to the phosphoglycerate kinase family. In terms of assembly, monomer.

Its subcellular location is the cytoplasm. The catalysed reaction is (2R)-3-phosphoglycerate + ATP = (2R)-3-phospho-glyceroyl phosphate + ADP. The protein operates within carbohydrate degradation; glycolysis; pyruvate from D-glyceraldehyde 3-phosphate: step 2/5. The chain is Phosphoglycerate kinase from Dictyoglomus turgidum (strain DSM 6724 / Z-1310).